We begin with the raw amino-acid sequence, 563 residues long: Merozoite receptor PK66 (563 aa).

Residues 1–13 (MNKIYYILFLSAQ) form the signal peptide. At 14-487 (CLVHMGKCER…DGKHKKKMLL (474 aa)) the chain is on the extracellular side. N-linked (GlcNAc...) asparagine glycosylation is found at Asn36, Asn107, Asn176, Asn189, Asn238, and Asn441. Residues 488 to 508 (IIIGVTGAVCVVAVASLFYFR) traverse the membrane as a helical segment. The Cytoplasmic portion of the chain corresponds to 509-563 (KKAQDDKYDKMDQAEAYGKTANTRKDEMLDPEASFWGEDKRASHTTPVLMEKPYY).

Belongs to the apicomplexan parasites AMA1 family.

It localises to the membrane. Merozoite receptor PK66 is a surface antigen involved in parasite invasion of erythrocytes. The sequence is that of Merozoite receptor PK66 (PK66) from Plasmodium knowlesi (strain nuri).